The chain runs to 161 residues: Troponin C, slow skeletal and cardiac muscles (161 aa).

The residue at position 1 (M1) is an N-acetylmethionine. 4 consecutive EF-hand domains span residues 16–51 (QKNE…LGQN), 52–87 (PTPE…CMKD), 92–127 (KSEE…TGET), and 128–161 (ITED…KGVE). Residues D65, D67, S69, T71, and E76 each contribute to the Ca(2+) site. At S98 the chain carries Phosphoserine. 10 residues coordinate Ca(2+): D105, N107, D109, Y111, E116, D141, N143, D145, R147, and E152.

This sequence belongs to the troponin C family.

In terms of biological role, troponin is the central regulatory protein of striated muscle contraction. Tn consists of three components: Tn-I which is the inhibitor of actomyosin ATPase, Tn-T which contains the binding site for tropomyosin and Tn-C. The binding of calcium to Tn-C abolishes the inhibitory action of Tn on actin filaments. The sequence is that of Troponin C, slow skeletal and cardiac muscles (Tnnc1) from Mus musculus (Mouse).